Reading from the N-terminus, the 196-residue chain is Late protein I196L (196 aa).

2 tandem repeats follow at residues 28–48 (SNYL…TSSN) and 49–68 (HITT…SSNH). A 3; approximate repeat occupies 69–87 (ITTAISNNITDKDDYTHFS).

The protein belongs to the asfivirus I196L family.

The sequence is that of Late protein I196L from Ornithodoros (relapsing fever ticks).